A 336-amino-acid chain; its full sequence is tRNA N6-adenosine threonylcarbamoyltransferase (336 aa).

Residues His114 and His118 each contribute to the Fe cation site. Residues 136 to 140 (LVSGG), Asp169, Gly182, Asp186, and Asn275 contribute to the substrate site. Asp301 lines the Fe cation pocket.

The protein belongs to the KAE1 / TsaD family. Fe(2+) is required as a cofactor.

It localises to the cytoplasm. The enzyme catalyses L-threonylcarbamoyladenylate + adenosine(37) in tRNA = N(6)-L-threonylcarbamoyladenosine(37) in tRNA + AMP + H(+). In terms of biological role, required for the formation of a threonylcarbamoyl group on adenosine at position 37 (t(6)A37) in tRNAs that read codons beginning with adenine. Is involved in the transfer of the threonylcarbamoyl moiety of threonylcarbamoyl-AMP (TC-AMP) to the N6 group of A37, together with TsaE and TsaB. TsaD likely plays a direct catalytic role in this reaction. This is tRNA N6-adenosine threonylcarbamoyltransferase from Streptococcus pneumoniae (strain Hungary19A-6).